The following is a 180-amino-acid chain: ATP-dependent protease subunit HslV (180 aa).

The active site involves Thr-7. Residues Ala-164, Cys-167, and Thr-170 each contribute to the Na(+) site.

This sequence belongs to the peptidase T1B family. HslV subfamily. A double ring-shaped homohexamer of HslV is capped on each side by a ring-shaped HslU homohexamer. The assembly of the HslU/HslV complex is dependent on binding of ATP.

The protein localises to the cytoplasm. It carries out the reaction ATP-dependent cleavage of peptide bonds with broad specificity.. With respect to regulation, allosterically activated by HslU binding. Its function is as follows. Protease subunit of a proteasome-like degradation complex believed to be a general protein degrading machinery. In Brevibacillus brevis (strain 47 / JCM 6285 / NBRC 100599), this protein is ATP-dependent protease subunit HslV.